A 489-amino-acid chain; its full sequence is Mitochondrial-processing peptidase subunit beta (489 aa).

A mitochondrion-targeting transit peptide spans 1–43; the sequence is MAAAAARVVLSSAARRRLWGFSESLLIRGAAGRSLYFGENRLR. H101 is a Zn(2+) binding site. Catalysis depends on E104, which acts as the Proton acceptor. Residues H105 and E181 each contribute to the Zn(2+) site.

Belongs to the peptidase M16 family. In terms of assembly, heterodimer of PMPCA (alpha) and PMPCB (beta) subunits, forming the mitochondrial processing protease (MPP) in which PMPCA is involved in substrate recognition and binding and PMPCB is the catalytic subunit. It depends on Zn(2+) as a cofactor.

The protein localises to the mitochondrion matrix. The enzyme catalyses Release of N-terminal transit peptides from precursor proteins imported into the mitochondrion, typically with Arg in position P2.. Its activity is regulated as follows. Binding to PMPCA is required for catalytic activity. Catalytic subunit of the essential mitochondrial processing protease (MPP), which cleaves the mitochondrial sequence off newly imported precursors proteins. Preferentially, cleaves after an arginine at position P2. Required for PINK1 turnover by coupling PINK1 mitochondrial import and cleavage, which results in subsequent PINK1 proteolysis. The protein is Mitochondrial-processing peptidase subunit beta (PMPCB) of Homo sapiens (Human).